Here is a 276-residue protein sequence, read N- to C-terminus: Formamidopyrimidine-DNA glycosylase (276 aa).

Residue Pro-2 is the Schiff-base intermediate with DNA of the active site. Glu-3 serves as the catalytic Proton donor. Lys-60 serves as the catalytic Proton donor; for beta-elimination activity. Positions 93 and 112 each coordinate DNA. An FPG-type zinc finger spans residues 240–274 (NVYGKKGEPCVTCGTILEKTVVGGRGTHYCPICQP). Residue Arg-264 is the Proton donor; for delta-elimination activity of the active site.

This sequence belongs to the FPG family. As to quaternary structure, monomer. The cofactor is Zn(2+).

The catalysed reaction is Hydrolysis of DNA containing ring-opened 7-methylguanine residues, releasing 2,6-diamino-4-hydroxy-5-(N-methyl)formamidopyrimidine.. It catalyses the reaction 2'-deoxyribonucleotide-(2'-deoxyribose 5'-phosphate)-2'-deoxyribonucleotide-DNA = a 3'-end 2'-deoxyribonucleotide-(2,3-dehydro-2,3-deoxyribose 5'-phosphate)-DNA + a 5'-end 5'-phospho-2'-deoxyribonucleoside-DNA + H(+). Involved in base excision repair of DNA damaged by oxidation or by mutagenic agents. Acts as a DNA glycosylase that recognizes and removes damaged bases. Has a preference for oxidized purines, such as 7,8-dihydro-8-oxoguanine (8-oxoG). Has AP (apurinic/apyrimidinic) lyase activity and introduces nicks in the DNA strand. Cleaves the DNA backbone by beta-delta elimination to generate a single-strand break at the site of the removed base with both 3'- and 5'-phosphates. This Bacillus anthracis protein is Formamidopyrimidine-DNA glycosylase.